A 134-amino-acid chain; its full sequence is Phospholipase A2 (134 aa).

Ca(2+)-binding residues include W8, G10, and G12. 5 disulfide bridges follow: C9/C31, C30/C70, C37/C63, C61/C95, and C105/C113. A glycan (N-linked (GlcNAc...) asparagine) is linked at N13. Residue H34 is part of the active site. Residue D35 coordinates Ca(2+). D64 is an active-site residue.

It belongs to the phospholipase A2 family. Group III subfamily. Ca(2+) is required as a cofactor. As to expression, expressed by the venom gland.

The protein localises to the secreted. The enzyme catalyses a 1,2-diacyl-sn-glycero-3-phosphocholine + H2O = a 1-acyl-sn-glycero-3-phosphocholine + a fatty acid + H(+). Its function is as follows. PLA2 catalyzes the calcium-dependent hydrolysis of the 2-acyl groups in 3-sn-phosphoglycerides. The chain is Phospholipase A2 from Apis dorsata (Giant honeybee).